A 243-amino-acid polypeptide reads, in one-letter code: Collagen triple helix repeat-containing protein 1 (243 aa).

Positions 1-30 (MRPQGPAASPQRLRGLLLLLLLQLPAPSSA) are cleaved as a signal peptide. One can recognise a Collagen-like domain in the interval 57–90 (QGPAGVPGRDGSPGANGIPGTPGIPGRDGFKGEK). Positions 62-85 (VPGRDGSPGANGIPGTPGIPGRDG) are disordered. N-linked (GlcNAc...) asparagine glycosylation is present at Asn-186.

In terms of processing, N-glycosylated. As to expression, isoform 1 is expressed in calcified atherosclerotic plaque and chondrocyte-like cells.

It localises to the secreted. Its subcellular location is the extracellular space. The protein localises to the extracellular matrix. May act as a negative regulator of collagen matrix deposition. The chain is Collagen triple helix repeat-containing protein 1 (CTHRC1) from Homo sapiens (Human).